Consider the following 510-residue polypeptide: Bifunctional purine biosynthesis protein PurH (510 aa).

The MGS-like domain maps to 1–145 (MSKRALISVS…KNFEDVLVVT (145 aa)).

This sequence belongs to the PurH family.

The enzyme catalyses (6R)-10-formyltetrahydrofolate + 5-amino-1-(5-phospho-beta-D-ribosyl)imidazole-4-carboxamide = 5-formamido-1-(5-phospho-D-ribosyl)imidazole-4-carboxamide + (6S)-5,6,7,8-tetrahydrofolate. It carries out the reaction IMP + H2O = 5-formamido-1-(5-phospho-D-ribosyl)imidazole-4-carboxamide. Its pathway is purine metabolism; IMP biosynthesis via de novo pathway; 5-formamido-1-(5-phospho-D-ribosyl)imidazole-4-carboxamide from 5-amino-1-(5-phospho-D-ribosyl)imidazole-4-carboxamide (10-formyl THF route): step 1/1. It participates in purine metabolism; IMP biosynthesis via de novo pathway; IMP from 5-formamido-1-(5-phospho-D-ribosyl)imidazole-4-carboxamide: step 1/1. This chain is Bifunctional purine biosynthesis protein PurH, found in Oceanobacillus iheyensis (strain DSM 14371 / CIP 107618 / JCM 11309 / KCTC 3954 / HTE831).